We begin with the raw amino-acid sequence, 74 residues long: Large ribosomal subunit protein uL30 (74 aa).

It belongs to the universal ribosomal protein uL30 family. Part of the 50S ribosomal subunit.

The polypeptide is Large ribosomal subunit protein uL30 (Koribacter versatilis (strain Ellin345)).